The following is a 102-amino-acid chain: Urease subunit beta (102 aa).

The protein belongs to the urease beta subunit family. Heterotrimer of UreA (gamma), UreB (beta) and UreC (alpha) subunits. Three heterotrimers associate to form the active enzyme.

Its subcellular location is the cytoplasm. The enzyme catalyses urea + 2 H2O + H(+) = hydrogencarbonate + 2 NH4(+). Its pathway is nitrogen metabolism; urea degradation; CO(2) and NH(3) from urea (urease route): step 1/1. This chain is Urease subunit beta, found in Clostridium perfringens.